The chain runs to 533 residues: Apolipoprotein N-acyltransferase (533 aa).

The next 5 helical transmembrane spans lie at 17–37, 72–92, 116–136, 165–185, and 190–210; these read FFLP…WPAV, LLFC…GGIL, GFRS…WAYM, GVWG…LLFM, and FQVK…PLLY. Residues 232 to 499 form the CN hydrolase domain; that stretch reads VQPDIDPHEK…QSVLTADVPL (268 aa). Glu-274 (proton acceptor) is an active-site residue. The active site involves Lys-352. Residue Cys-410 is the Nucleophile of the active site. A helical transmembrane segment spans residues 510–530; that stretch reads PDLVPHVCLGIAGVLALVAAV.

It belongs to the CN hydrolase family. Apolipoprotein N-acyltransferase subfamily.

It is found in the cell inner membrane. The catalysed reaction is N-terminal S-1,2-diacyl-sn-glyceryl-L-cysteinyl-[lipoprotein] + a glycerophospholipid = N-acyl-S-1,2-diacyl-sn-glyceryl-L-cysteinyl-[lipoprotein] + a 2-acyl-sn-glycero-3-phospholipid + H(+). It functions in the pathway protein modification; lipoprotein biosynthesis (N-acyl transfer). In terms of biological role, catalyzes the phospholipid dependent N-acylation of the N-terminal cysteine of apolipoprotein, the last step in lipoprotein maturation. The protein is Apolipoprotein N-acyltransferase of Chlorobaculum tepidum (strain ATCC 49652 / DSM 12025 / NBRC 103806 / TLS) (Chlorobium tepidum).